We begin with the raw amino-acid sequence, 276 residues long: Formamidopyrimidine-DNA glycosylase (276 aa).

Pro-2 acts as the Schiff-base intermediate with DNA in catalysis. The active-site Proton donor is the Glu-3. Catalysis depends on Lys-58, which acts as the Proton donor; for beta-elimination activity. The DNA site is built by His-94, Arg-112, and Arg-157. The segment at 242-276 (FVYDRAGEPCRVCGAPIRQIVQGQRSTYFCPNCQR) adopts an FPG-type zinc-finger fold. Arg-266 serves as the catalytic Proton donor; for delta-elimination activity.

Belongs to the FPG family. In terms of assembly, monomer. The cofactor is Zn(2+).

The catalysed reaction is Hydrolysis of DNA containing ring-opened 7-methylguanine residues, releasing 2,6-diamino-4-hydroxy-5-(N-methyl)formamidopyrimidine.. It catalyses the reaction 2'-deoxyribonucleotide-(2'-deoxyribose 5'-phosphate)-2'-deoxyribonucleotide-DNA = a 3'-end 2'-deoxyribonucleotide-(2,3-dehydro-2,3-deoxyribose 5'-phosphate)-DNA + a 5'-end 5'-phospho-2'-deoxyribonucleoside-DNA + H(+). In terms of biological role, involved in base excision repair of DNA damaged by oxidation or by mutagenic agents. Acts as a DNA glycosylase that recognizes and removes damaged bases. Has a preference for oxidized purines, such as 7,8-dihydro-8-oxoguanine (8-oxoG). Has AP (apurinic/apyrimidinic) lyase activity and introduces nicks in the DNA strand. Cleaves the DNA backbone by beta-delta elimination to generate a single-strand break at the site of the removed base with both 3'- and 5'-phosphates. This chain is Formamidopyrimidine-DNA glycosylase, found in Burkholderia pseudomallei (strain 1710b).